The following is a 468-amino-acid chain: 6-phospho-beta-galactosidase (468 aa).

D-galactose 6-phosphate-binding residues include glutamine 19, histidine 116, asparagine 159, glutamate 160, and asparagine 297. Glutamate 160 (proton donor) is an active-site residue. Residue glutamate 375 is the Nucleophile of the active site. The D-galactose 6-phosphate site is built by serine 428, tryptophan 429, lysine 435, and tyrosine 437.

The protein belongs to the glycosyl hydrolase 1 family.

The catalysed reaction is a 6-phospho-beta-D-galactoside + H2O = D-galactose 6-phosphate + an alcohol. The protein operates within carbohydrate metabolism; lactose degradation; D-galactose 6-phosphate and beta-D-glucose from lactose 6-phosphate: step 1/1. The protein is 6-phospho-beta-galactosidase of Streptococcus pyogenes serotype M1.